Consider the following 273-residue polypeptide: Transmembrane protein 45A (273 aa).

The next 5 membrane-spanning stretches (helical) occupy residues 8-27 (ALPG…KNIL), 55-79 (VVVL…ALIL), 108-131 (IICF…AIFV), 153-171 (LLVF…EFLV), and 217-236 (MFLS…LIGV).

Belongs to the TMEM45 family.

It localises to the membrane. This is Transmembrane protein 45A (Tmem45a) from Mus musculus (Mouse).